The following is a 540-amino-acid chain: Chaperonin GroEL (540 aa).

Residues 29–32 (TIGP), 86–90 (DGTTT), G413, 476–478 (NAA), and D492 contribute to the ATP site. The interval 520 to 540 (DKPEPESNNQMPATPGMGGMM) is disordered.

This sequence belongs to the chaperonin (HSP60) family. In terms of assembly, forms a cylinder of 14 subunits composed of two heptameric rings stacked back-to-back. Interacts with the co-chaperonin GroES.

It localises to the cytoplasm. The catalysed reaction is ATP + H2O + a folded polypeptide = ADP + phosphate + an unfolded polypeptide.. Together with its co-chaperonin GroES, plays an essential role in assisting protein folding. The GroEL-GroES system forms a nano-cage that allows encapsulation of the non-native substrate proteins and provides a physical environment optimized to promote and accelerate protein folding. This Ligilactobacillus salivarius (strain UCC118) (Lactobacillus salivarius) protein is Chaperonin GroEL.